Reading from the N-terminus, the 180-residue chain is KxDL motif-containing protein 1 (180 aa).

Composition is skewed to polar residues over residues 130-144 (TSEQSTESCDTSPSI) and 158-170 (QAPSDTPSVNGQI). The interval 130–180 (TSEQSTESCDTSPSIISPAMSQDFEDLSQAPSDTPSVNGQILTDEELVHED) is disordered.

It belongs to the KXD1 family. In terms of assembly, associates with the BLOC-1 complex.

The protein resides in the lysosome membrane. Its function is as follows. As part of a BORC-like complex may play a role in lysosomes movement and localization at the cell periphery. Associated with the cytosolic face of lysosomes, this complex may couple lysosomes to microtubule plus-end-directed kinesin motor. May also be involved in the biogenesis of lysosome-related organelles such as melanosomes. The polypeptide is KxDL motif-containing protein 1 (kxd1) (Xenopus laevis (African clawed frog)).